We begin with the raw amino-acid sequence, 502 residues long: Arginine-specific demethylase JMJ22 (502 aa).

A disordered region spans residues 15-45 (KSKSKRLKLHQHEPESLFPEKEVEEEDEDEG). The span at 24–35 (HQHEPESLFPEK) shows a compositional bias: basic and acidic residues. The F-box domain maps to 80 to 126 (LGNLQILSDELVLDILGLLGANHLGVLATVTKSFYIFANHEPLWRNL). The 161-residue stretch at 279–439 (EKVPVLDSEY…NVLEFLKKPN (161 aa)) folds into the JmjC domain. The Fe cation site is built by H324, D326, and H407.

This sequence belongs to the JARID1 histone demethylase family. Requires Fe(2+) as cofactor. Expressed in inflorescences, roots and siliques, and, at low levels, in leaves and stems.

The protein resides in the nucleus. The catalysed reaction is N(omega),N(omega)-dimethyl-L-arginyl-[protein] + 2-oxoglutarate + O2 = N(omega)-methyl-L-arginyl-[protein] + formaldehyde + succinate + CO2. Its function is as follows. Histone demethylase that demethylates 'Arg-3' (H4R3me) of histone H4 with a specific activity for H4R3me2. Involved in the positive regulation of gene expression. Together with JMJ20, positively regulates seed germination by promoting the removal of repressive histone arginine methylations (e.g. H4R3me2) at GA3ox1 and GA3ox2 to trigger gibberellic acid (GA) biosynthesis. In Arabidopsis thaliana (Mouse-ear cress), this protein is Arginine-specific demethylase JMJ22.